The sequence spans 219 residues: uncharacterized protein (219 aa).

This is an uncharacterized protein from Acanthamoeba polyphaga mimivirus (APMV).